A 169-amino-acid chain; its full sequence is Large ribosomal subunit protein uL18 (169 aa).

This sequence belongs to the universal ribosomal protein uL18 family. As to quaternary structure, part of the 50S ribosomal subunit. Contacts the 5S and 23S rRNAs.

Its function is as follows. This is one of the proteins that bind and probably mediate the attachment of the 5S RNA into the large ribosomal subunit, where it forms part of the central protuberance. This chain is Large ribosomal subunit protein uL18, found in Methanothrix thermoacetophila (strain DSM 6194 / JCM 14653 / NBRC 101360 / PT) (Methanosaeta thermophila).